We begin with the raw amino-acid sequence, 20 residues long: Short cationic peptide-4a (20 aa).

A Glutamic acid 1-amide modification is found at E20.

Expressed by the venom gland.

Its subcellular location is the secreted. The chain is Short cationic peptide-4a from Cupiennius salei (American wandering spider).